A 266-amino-acid polypeptide reads, in one-letter code: 4-hydroxy-tetrahydrodipicolinate reductase (266 aa).

An NAD(+)-binding site is contributed by 10–15; it reads GPRGRM. Lys-38 serves as a coordination point for NADP(+). NAD(+)-binding positions include 99 to 101 and 125 to 128; these read GTT and APNF. Catalysis depends on His-155, which acts as the Proton donor/acceptor. (S)-2,3,4,5-tetrahydrodipicolinate is bound at residue His-156. Lys-159 (proton donor) is an active-site residue. 165–166 contacts (S)-2,3,4,5-tetrahydrodipicolinate; the sequence is GT.

This sequence belongs to the DapB family.

It localises to the cytoplasm. It carries out the reaction (S)-2,3,4,5-tetrahydrodipicolinate + NAD(+) + H2O = (2S,4S)-4-hydroxy-2,3,4,5-tetrahydrodipicolinate + NADH + H(+). The enzyme catalyses (S)-2,3,4,5-tetrahydrodipicolinate + NADP(+) + H2O = (2S,4S)-4-hydroxy-2,3,4,5-tetrahydrodipicolinate + NADPH + H(+). The protein operates within amino-acid biosynthesis; L-lysine biosynthesis via DAP pathway; (S)-tetrahydrodipicolinate from L-aspartate: step 4/4. Its function is as follows. Catalyzes the conversion of 4-hydroxy-tetrahydrodipicolinate (HTPA) to tetrahydrodipicolinate. This Bacillus cereus (strain ATCC 10987 / NRS 248) protein is 4-hydroxy-tetrahydrodipicolinate reductase.